The chain runs to 564 residues: CTP synthase (564 aa).

Residues 1 to 272 form an amidoligase domain region; that stretch reads MARPKNVKHI…DIRVLKKLGL (272 aa). CTP is bound at residue S18. Residue S18 participates in UTP binding. 19–24 provides a ligand contact to ATP; that stretch reads SLGKGI. Y59 is an L-glutamine binding site. Residue D76 participates in ATP binding. Residues D76 and E146 each contribute to the Mg(2+) site. CTP contacts are provided by residues 153-155, 193-198, and K229; these read DIE and KTKPTQ. Residues 193-198 and K229 each bind UTP; that span reads KTKPTQ. Residues 299–543 enclose the Glutamine amidotransferase type-1 domain; that stretch reads TIAICGKYTE…VAAAKEFAHG (245 aa). G363 contributes to the L-glutamine binding site. C390 functions as the Nucleophile; for glutamine hydrolysis in the catalytic mechanism. Residues 391-394, E414, and R471 each bind L-glutamine; that span reads LGMQ. Residues H516 and E518 contribute to the active site.

It belongs to the CTP synthase family. Homotetramer.

The catalysed reaction is UTP + L-glutamine + ATP + H2O = CTP + L-glutamate + ADP + phosphate + 2 H(+). The enzyme catalyses L-glutamine + H2O = L-glutamate + NH4(+). It carries out the reaction UTP + NH4(+) + ATP = CTP + ADP + phosphate + 2 H(+). Its pathway is pyrimidine metabolism; CTP biosynthesis via de novo pathway; CTP from UDP: step 2/2. Its activity is regulated as follows. Allosterically activated by GTP, when glutamine is the substrate; GTP has no effect on the reaction when ammonia is the substrate. The allosteric effector GTP functions by stabilizing the protein conformation that binds the tetrahedral intermediate(s) formed during glutamine hydrolysis. Inhibited by the product CTP, via allosteric rather than competitive inhibition. Functionally, catalyzes the ATP-dependent amination of UTP to CTP with either L-glutamine or ammonia as the source of nitrogen. Regulates intracellular CTP levels through interactions with the four ribonucleotide triphosphates. This chain is CTP synthase, found in Prosthecochloris aestuarii (strain DSM 271 / SK 413).